Consider the following 163-residue polypeptide: Probable cyclic pyranopterin monophosphate synthase (163 aa).

The disordered stretch occupies residues 1–23; it reads MPDGDDDALTHTTADGDAQMVDV. Substrate is bound by residues 80–82 and 116–117; these read MCH and ME. Asp131 is a catalytic residue.

The protein belongs to the MoaC family. In terms of assembly, homohexamer; trimer of dimers.

The catalysed reaction is (8S)-3',8-cyclo-7,8-dihydroguanosine 5'-triphosphate = cyclic pyranopterin phosphate + diphosphate. It functions in the pathway cofactor biosynthesis; molybdopterin biosynthesis. In terms of biological role, catalyzes the conversion of (8S)-3',8-cyclo-7,8-dihydroguanosine 5'-triphosphate to cyclic pyranopterin monophosphate (cPMP). This is Probable cyclic pyranopterin monophosphate synthase from Halobacterium salinarum (strain ATCC 29341 / DSM 671 / R1).